We begin with the raw amino-acid sequence, 297 residues long: Adrenocorticotropic hormone receptor (297 aa).

At 1–23 (MKHITDLYESVNSTMSNKSDCPP) the chain is on the extracellular side. N12 and N17 each carry an N-linked (GlcNAc...) asparagine glycan. Cystine bridges form between C21–C253 and C245–C251. A helical membrane pass occupies residues 24–49 (VVLPEEVFFTISVIGVLENLIVLLAV). Residues 50–58 (IKNKNLQSP) are Cytoplasmic-facing. Residues 59–79 (MYFFICSLAISDMLGSLYKIL) traverse the membrane as a helical segment. Over 80 to 104 (ENILIIFRNMGYLEPRGGFESTADD) the chain is Extracellular. Residues 105-126 (VVDSLFILSLLGSICSLSAIAA) traverse the membrane as a helical segment. At 127–147 (DRYITIFHALQYQRLVTPRRA) the chain is on the cytoplasmic side. The helical transmembrane segment at 148–168 (AVVLLIIWACCIGSGITIVTF) threads the bilayer. The Extracellular portion of the chain corresponds to 169 to 180 (SHHVPAVIAFTA). A helical transmembrane segment spans residues 181 to 199 (LFPLMLVFILCLYGHMFLL). The Cytoplasmic portion of the chain corresponds to 200-217 (ARSHARRVSTLPRANMKG). Residues 218–244 (AITLTVLLGVFIFCWAPFVLHILLMTF) form a helical membrane-spanning segment. Over 245–256 (CPADPYCACYLA) the chain is Extracellular. Residues 257–278 (LFQVNAVLIMCNAIIDPFIYAF) form a helical membrane-spanning segment. The Cytoplasmic portion of the chain corresponds to 279–297 (RSPELRDAFKKMIICKRYP). Residue C293 is the site of S-palmitoyl cysteine attachment.

This sequence belongs to the G-protein coupled receptor 1 family. Homodimer. Interacts with corticotropin (ACTH). Interacts with MRAP; this interaction targets MC2R to the plasma membrane. Interacts with MRAP2; competing with MRAP for binding to MC2R and impairing the binding of corticotropin (ACTH). In terms of processing, ubiquitinated by MGRN1 that may be involved in post-endocytic trafficking and/or degradation of internalized receptor. As to expression, expressed in skin and adrenal gland tissues.

The protein localises to the cell membrane. Its function is as follows. Hormone receptor primarily expressed in adrenal cortex that plays a key role in regulating adrenocortical function. Upon corticotropin (ACTH) binding, facilitates the release of adrenal glucocorticoids, including cortisol and corticosterone. In addition, MC2R is required for fetal and neonatal adrenal gland development. Mechanistically, activates adenylate cyclase (cAMP), the MAPK cascade as well as the cAMP-dependent protein kinase A pathway leading to steroidogenic factor 1/NR5A1-mediated transcriptional activation. This chain is Adrenocorticotropic hormone receptor (MC2R), found in Sus scrofa (Pig).